Consider the following 203-residue polypeptide: LexA repressor (203 aa).

Residues 30 to 50 constitute a DNA-binding region (H-T-H motif); that stretch reads VREICQAVSLKSTSTVHGHLK. Active-site for autocatalytic cleavage activity residues include Ser127 and Lys164.

It belongs to the peptidase S24 family. In terms of assembly, homodimer.

The enzyme catalyses Hydrolysis of Ala-|-Gly bond in repressor LexA.. In terms of biological role, represses a number of genes involved in the response to DNA damage (SOS response), including recA and lexA. In the presence of single-stranded DNA, RecA interacts with LexA causing an autocatalytic cleavage which disrupts the DNA-binding part of LexA, leading to derepression of the SOS regulon and eventually DNA repair. The polypeptide is LexA repressor (Clostridium perfringens (strain SM101 / Type A)).